A 390-amino-acid chain; its full sequence is MAKHCQGAAAEDISAVSDEELLRWSKEELIKRLRKVDNEKMSLMLEHGNMMKDVNRRLQLHLHEIRGLKDVNQKLQDESQELRELCCFLDDDRQKGKKLSREWQRFGRHSATVVWKEVGTYQQKLKELEAKQESLVRDNLELKEIILMLDEERNGPGSRSSIDSQNSLTNLNGGSGPRDVGDGSSTSSTGSAGSPDHHHHHHHIKTTENKAGTIRKSTDDLSVPPHHRSIPNGLNDSSTTYIRQLETRVKLLEDDNKLLSQHSTSGELRTLRKGLSPYHSESQLSSLPQYQEPLQNGSARVAPEVSSTAPAGYIPVVQKPEAVVHAMKVLEVHENLDRQIPDTYEEDLSEKEKAIVREMCNVVWRKLGDAANSKPSIRQHLSGNQFKGPL.

2 coiled-coil regions span residues 26–86 (KEEL…RELC) and 116–146 (KEVG…KEII). A disordered region spans residues 153–237 (RNGPGSRSSI…RSIPNGLNDS (85 aa)). Polar residues predominate over residues 157-172 (GSRSSIDSQNSLTNLN). Low complexity predominate over residues 182-194 (DGSSTSSTGSAGS).

This sequence belongs to the CCDC85 family.

It is found in the cell junction. It localises to the tight junction. The protein resides in the adherens junction. Functionally, may play a role in cell-cell adhesion and epithelium development. May play an important role in cortical development, especially in the maintenance of radial glia. The protein is Coiled-coil domain-containing protein 85C (ccdc85c) of Xenopus laevis (African clawed frog).